The sequence spans 1041 residues: Nuclear migration protein unc-83 (1041 aa).

Disordered regions lie at residues 258–283 (VGHL…TETV), 453–498 (IHGQ…LEDD), and 613–646 (IRNR…DSIS). The span at 456–465 (QKKPLRRASR) shows a compositional bias: basic residues. Positions 613-626 (IRNRDSDTAPEHSD) are enriched in basic and acidic residues. Coiled-coil stretches lie at residues 785–816 (RSKE…DLLA) and 931–951 (KAEL…FNDM). A KASH domain is found at 986 to 1041 (TENEPLTIAEAISSSRLIKFTFALSLLAALAAIFYYHVFGKPFGPHVTYVNGPPPV). A helical; Anchor for type IV membrane protein membrane pass occupies residues 1005-1024 (FTFALSLLAALAAIFYYHVF).

As to quaternary structure, component of the unc-83-unc-84 LINC complex which contains at least unc-83 and unc-84. Within the unc-83-unc-84 LINC complex interacts with unc-84 (via C-terminus); the interaction is probably required to recruit unc-83 to the nuclear envelope where it then recruits dynein and kinesin-1 complexes to regulate nuclear migration. Interacts with bicd-1 and dlc-1. Interacts with nud-2 (via C-terminus); the interaction is direct, and is required for recruitment of nud-2 to the nuclear envelope. Interacts with klc-2; the interaction is direct. Predominantly expressed in migratory nuclei. Expressed in a variety of cell-types, including cells around the pharynx and in the uterus.

The protein resides in the nucleus membrane. It localises to the nucleus outer membrane. Cargo-specific adapter that is involved in nuclear migration during development and thereafter. Component of the unc-83-unc-84 LINC (LInker of Nucleoskeleton and Cytoskeleton) complex where it interacts with unc-84 to form a bridge connecting the nuclear envelope to the cytoskeleton which allows for nuclear transport along microtubules. Within the complex, connects the nuclear envelope to the microtubule cytoskeleton through the kinesin-1 light chain protein klc-2 (most likely within the Kinesin 1 motor complex) to regulate nuclear migrations. Moreover, within the complex, also recruits the large microtubule-associated bicd-1-dlc-1-egal-1 and lis-1-nud-2 complexes to the nuclear envelope to regulate both the bidirectional migration of nuclei and the extent of nuclear migrations. Not required for centrosome attachment to the nucleus. The sequence is that of Nuclear migration protein unc-83 from Caenorhabditis elegans.